The chain runs to 333 residues: Small ribosomal subunit protein uS2 (333 aa).

Belongs to the universal ribosomal protein uS2 family.

The polypeptide is Small ribosomal subunit protein uS2 (Azorhizobium caulinodans (strain ATCC 43989 / DSM 5975 / JCM 20966 / LMG 6465 / NBRC 14845 / NCIMB 13405 / ORS 571)).